The chain runs to 263 residues: MLRNKPRAAVTTKKQTSLLMADQPPPPKPNTCHCSPSLFSSPKFRFFTSKMMMTPFDSDFSLVSPTSILEANPSIFSSKNPKPVSYFEPTIPNPQRFHSPDVFGLADLVKDGDSNRDHSRKPVNKMVLFGSKLRVQIPSSADFGTKTGIRYPPCQLSPCVQTKVLAVSEIDQTEDYTRVISHGPNPTITHIFDNSVFVEATPCSVPLPQPAMETKSTESFLSRCFTCKKNLDQKQDIYIYRGEKGFCSSECRYQEMLLDQMET.

The FLZ-type zinc-finger motif lies at 219-263; that stretch reads SFLSRCFTCKKNLDQKQDIYIYRGEKGFCSSECRYQEMLLDQMET.

Belongs to the FLZ family. In terms of assembly, interacts with KIN10 and KIN11 via its FLZ-type zinc finger domain. Interacts with KINB1 and KINB2 via its N-terminal part. Interacts with TZF4, TZF5 and TZF6. Interacts with MPK3 and MPK6.

Its subcellular location is the cytoplasm. It localises to the stress granule. The protein resides in the P-body. May act as an adapter to facilitate the interaction of SnRK1 complex with effector proteins, conferring tissue- and stimulus-type specific differences in the SnRK1 regulation pathway. Involved in seed dormancy control. This Arabidopsis thaliana (Mouse-ear cress) protein is Protein MARD1.